The chain runs to 115 residues: NADH-ubiquinone oxidoreductase chain 3 (115 aa).

3 consecutive transmembrane segments (helical) span residues 4 to 24, 55 to 75, and 87 to 107; these read LMVMLVNITLSSCLIMIAFWL, FFLVAITFFLFDLEIALLLPL, and MMLTAFILVSVLALGLAYEWM.

The protein belongs to the complex I subunit 3 family. In terms of assembly, core subunit of respiratory chain NADH dehydrogenase (Complex I) which is composed of 45 different subunits. Interacts with TMEM186. Interacts with TMEM242.

The protein resides in the mitochondrion inner membrane. It carries out the reaction a ubiquinone + NADH + 5 H(+)(in) = a ubiquinol + NAD(+) + 4 H(+)(out). Its function is as follows. Core subunit of the mitochondrial membrane respiratory chain NADH dehydrogenase (Complex I) which catalyzes electron transfer from NADH through the respiratory chain, using ubiquinone as an electron acceptor. Essential for the catalytic activity of complex I. The polypeptide is NADH-ubiquinone oxidoreductase chain 3 (Peromyscus mexicanus (Mexican deer mouse)).